A 151-amino-acid polypeptide reads, in one-letter code: Probable cGMP 3',5'-cyclic phosphodiesterase subunit delta (151 aa).

Belongs to the PDE6D/unc-119 family. In terms of assembly, interacts with Pde6.

The protein resides in the nucleus. It is found in the cytoplasm. The sequence is that of Probable cGMP 3',5'-cyclic phosphodiesterase subunit delta from Drosophila virilis (Fruit fly).